A 117-amino-acid chain; its full sequence is Large ribosomal subunit protein bL20c (117 aa).

Belongs to the bacterial ribosomal protein bL20 family.

Its subcellular location is the plastid. It localises to the chloroplast. Its function is as follows. Binds directly to 23S ribosomal RNA and is necessary for the in vitro assembly process of the 50S ribosomal subunit. It is not involved in the protein synthesizing functions of that subunit. This chain is Large ribosomal subunit protein bL20c (rpl20), found in Arabidopsis thaliana (Mouse-ear cress).